The primary structure comprises 143 residues: Transcriptional regulator MraZ (143 aa).

SpoVT-AbrB domains follow at residues 5–47 (EYSH…PQKE) and 76–119 (AAEC…SQEL).

The protein belongs to the MraZ family. As to quaternary structure, forms oligomers.

It is found in the cytoplasm. Its subcellular location is the nucleoid. The sequence is that of Transcriptional regulator MraZ from Carboxydothermus hydrogenoformans (strain ATCC BAA-161 / DSM 6008 / Z-2901).